Here is a 415-residue protein sequence, read N- to C-terminus: Serine hydroxymethyltransferase (415 aa).

(6S)-5,6,7,8-tetrahydrofolate-binding positions include Leu-117 and 121-123 (GHL). Lys-226 carries the N6-(pyridoxal phosphate)lysine modification. (6S)-5,6,7,8-tetrahydrofolate is bound by residues Glu-241 and 349–351 (SPF).

It belongs to the SHMT family. Homodimer. The cofactor is pyridoxal 5'-phosphate.

It is found in the cytoplasm. It carries out the reaction (6R)-5,10-methylene-5,6,7,8-tetrahydrofolate + glycine + H2O = (6S)-5,6,7,8-tetrahydrofolate + L-serine. The protein operates within one-carbon metabolism; tetrahydrofolate interconversion. It functions in the pathway amino-acid biosynthesis; glycine biosynthesis; glycine from L-serine: step 1/1. Functionally, catalyzes the reversible interconversion of serine and glycine with tetrahydrofolate (THF) serving as the one-carbon carrier. This reaction serves as the major source of one-carbon groups required for the biosynthesis of purines, thymidylate, methionine, and other important biomolecules. Also exhibits THF-independent aldolase activity toward beta-hydroxyamino acids, producing glycine and aldehydes, via a retro-aldol mechanism. The sequence is that of Serine hydroxymethyltransferase from Geobacter metallireducens (strain ATCC 53774 / DSM 7210 / GS-15).